The primary structure comprises 436 residues: Chaperone protein dnaJ 16 (436 aa).

Residues 20–85 (DPYEVLGVLR…EKRRQFDSAG (66 aa)) form the J domain. Residues 291–348 (TQEKEDLRSVEAQILTKRAELAKFETEYREVLVQFTDMTSRYAQEMQSIDELLKQRNE) are a coiled coil. The disordered stretch occupies residues 360 to 416 (KRSSSKNRMRKSSFKKAAAKAPAPTEQEEEEEEEEEEEEESSRQKNKKPSTCDKSET). Basic residues predominate over residues 362–377 (SSSKNRMRKSSFKKAA). A compositionally biased stretch (acidic residues) spans 385–399 (EQEEEEEEEEEEEEE).

Belongs to the DnaJ family. B/II subfamily. In terms of tissue distribution, expressed constitutively in seedlings, roots, leaves, stems, flowers and siliques.

Its subcellular location is the membrane. Its function is as follows. Plays a continuous role in plant development probably in the structural organization of compartments. Seems to not be involved in gravitropism signaling pathway. The chain is Chaperone protein dnaJ 16 (ATJ16) from Arabidopsis thaliana (Mouse-ear cress).